The chain runs to 525 residues: UPF0288 protein MA_3997 (525 aa).

It belongs to the UPF0288 family.

The sequence is that of UPF0288 protein MA_3997 from Methanosarcina acetivorans (strain ATCC 35395 / DSM 2834 / JCM 12185 / C2A).